The chain runs to 407 residues: Peptidase T (407 aa).

His81 contributes to the Zn(2+) binding site. Residue Asp83 is part of the active site. Asp142 is a Zn(2+) binding site. Glu176 (proton acceptor) is an active-site residue. Positions 177, 199, and 381 each coordinate Zn(2+).

This sequence belongs to the peptidase M20B family. Zn(2+) serves as cofactor.

It is found in the cytoplasm. It catalyses the reaction Release of the N-terminal residue from a tripeptide.. Functionally, cleaves the N-terminal amino acid of tripeptides. The chain is Peptidase T from Streptococcus pneumoniae (strain Hungary19A-6).